The primary structure comprises 412 residues: Glutamyl-tRNA reductase (412 aa).

Residues 52–55 (TCNR), Ser108, 113–115 (EYE), and Gln119 contribute to the substrate site. Cys53 (nucleophile) is an active-site residue. 189–194 (GAGEIG) contributes to the NADP(+) binding site.

Belongs to the glutamyl-tRNA reductase family. As to quaternary structure, homodimer.

It catalyses the reaction (S)-4-amino-5-oxopentanoate + tRNA(Glu) + NADP(+) = L-glutamyl-tRNA(Glu) + NADPH + H(+). The protein operates within porphyrin-containing compound metabolism; protoporphyrin-IX biosynthesis; 5-aminolevulinate from L-glutamyl-tRNA(Glu): step 1/2. Its function is as follows. Catalyzes the NADPH-dependent reduction of glutamyl-tRNA(Glu) to glutamate 1-semialdehyde (GSA). The protein is Glutamyl-tRNA reductase of Sulfurisphaera tokodaii (strain DSM 16993 / JCM 10545 / NBRC 100140 / 7) (Sulfolobus tokodaii).